A 398-amino-acid polypeptide reads, in one-letter code: 2-epi-5-epi-valiolone synthase (398 aa).

NAD(+)-binding positions include Asp62, 93–96 (ETVK), 126–130 (GVLMD), 150–151 (TT), Lys163, Lys172, and 190–193 (FLAT). The active site involves Lys163. A divalent metal cation-binding residues include Glu205, His276, and His292.

This sequence belongs to the sugar phosphate cyclases superfamily. EEVS family. Requires NAD(+) as cofactor. Co(2+) serves as cofactor.

It catalyses the reaction D-sedoheptulose 7-phosphate = 2-epi-5-epi-valiolone + phosphate. Catalyzes the cyclization of D-sedoheptulose 7-phosphate to 2-epi-5-epi-valiolone. Does not use ido-heptulose 7-phosphate and 3-deoxy-arabino-heptulosonate 7-phosphate. Involved in the biosynthesis of the acarviose moiety of the alpha-glucosidase inhibitor acarbose. In Actinoplanes sp. (strain ATCC 31044 / CBS 674.73 / SE50/110), this protein is 2-epi-5-epi-valiolone synthase.